The primary structure comprises 73 residues: Aldehyde dehydrogenase (73 aa).

This sequence belongs to the aldehyde dehydrogenase family.

The enzyme catalyses an aldehyde + NAD(+) + H2O = a carboxylate + NADH + 2 H(+). It functions in the pathway alcohol metabolism; ethanol degradation; acetate from ethanol: step 2/2. The polypeptide is Aldehyde dehydrogenase (Geobacillus stearothermophilus (Bacillus stearothermophilus)).